Reading from the N-terminus, the 500-residue chain is Probable cytosol aminopeptidase (500 aa).

Residues Lys264 and Asp269 each contribute to the Mn(2+) site. Lys276 is an active-site residue. Residues Asp287, Asp346, and Glu348 each contribute to the Mn(2+) site. Arg350 is a catalytic residue.

The protein belongs to the peptidase M17 family. It depends on Mn(2+) as a cofactor.

The protein localises to the cytoplasm. It carries out the reaction Release of an N-terminal amino acid, Xaa-|-Yaa-, in which Xaa is preferably Leu, but may be other amino acids including Pro although not Arg or Lys, and Yaa may be Pro. Amino acid amides and methyl esters are also readily hydrolyzed, but rates on arylamides are exceedingly low.. The catalysed reaction is Release of an N-terminal amino acid, preferentially leucine, but not glutamic or aspartic acids.. Its function is as follows. Presumably involved in the processing and regular turnover of intracellular proteins. Catalyzes the removal of unsubstituted N-terminal amino acids from various peptides. This chain is Probable cytosol aminopeptidase, found in Rhodopseudomonas palustris (strain BisB5).